A 1651-amino-acid chain; its full sequence is Vitellogenin-6 (1651 aa).

The first 15 residues, 1–15, serve as a signal peptide directing secretion; that stretch reads MKFFIALALLGAALA. The Vitellogenin domain occupies 34–716; sequence FRAGREYRYL…TTESVLPTEM (683 aa). 2 N-linked (GlcNAc...) asparagine glycosylation sites follow: N252 and N1288. The VWFD domain maps to 1340–1515; the sequence is ANCVVKSTKI…SYLYKDSKCN (176 aa). Cystine bridges form between C1342-C1479 and C1364-C1514. The disordered stretch occupies residues 1527-1556; the sequence is FQRIEKNQEEEKDQEMNYEESRREQDDEPT.

In terms of tissue distribution, synthesized in Caenorhabditis only by 32 cells building the intestine of adult hermaphroditic individuals; they are cotranslationally secreted into the body cavity and subsequently taken up by the gonad.

The protein localises to the secreted. Functionally, precursor of the egg-yolk proteins that are sources of nutrients during embryonic development. May play a role in cholesterol uptake. May be involved in thermotolerance. The protein is Vitellogenin-6 (vit-6) of Caenorhabditis elegans.